We begin with the raw amino-acid sequence, 461 residues long: MSTNTISHVGDLNDEQALSFFGTDGIRGKSQTFLTNSLVSQIGYWCNHVLLGEGPILIGQDSRASSERIASALAHGLATKNREIWLLGLCPTPAVSHLIKKYNASGGLMISASHNPPEDNGIKIFDKTGEKISLEKQIFIDNKLKRKVLIPICKDKDNCINRNDLLKDYKNSLLNTVDKESLIDIPIVLDLCWGSASSCGEKLFKALGANVISINAIPDGEKINVNCGSTHLEHIKKVVLESNAQMGFAFDGDADRMIAIDGKGRVIDGDHSLYLWGSSLQDKNMLPEQRLVTTVMSNLGLEKAWLNRGGKLTRTPVGDQHVHKAMLTNKASLGGEQSGHILSTLNDLCGDGLLAAIQLSSICNRKGILLSEWRDQSFKPYPQKLISVPIAKHITQNYLNKSEKFRLSIAEAELDLGKEGRVFIRKSGTEPLVRVMVESIDKLLVESLTTKIAKIALEEFN.

The active-site Phosphoserine intermediate is the serine 113. Mg(2+) contacts are provided by serine 113, aspartate 251, aspartate 253, and aspartate 255. Serine 113 is subject to Phosphoserine.

The protein belongs to the phosphohexose mutase family. It depends on Mg(2+) as a cofactor. In terms of processing, activated by phosphorylation.

The enzyme catalyses alpha-D-glucosamine 1-phosphate = D-glucosamine 6-phosphate. Its function is as follows. Catalyzes the conversion of glucosamine-6-phosphate to glucosamine-1-phosphate. The sequence is that of Phosphoglucosamine mutase from Prochlorococcus marinus (strain SARG / CCMP1375 / SS120).